The sequence spans 428 residues: Adenosylhomocysteinase (428 aa).

Substrate-binding residues include Thr-62, Asp-134, and Glu-159. 160–162 (TTT) contacts NAD(+). Residues Lys-189 and Asp-193 each coordinate substrate. Residues Asn-194, 223 to 228 (GYGWCG), Glu-246, Asn-281, 302 to 304 (SGH), and Asn-349 each bind NAD(+).

The protein belongs to the adenosylhomocysteinase family. NAD(+) serves as cofactor.

The protein localises to the cytoplasm. It catalyses the reaction S-adenosyl-L-homocysteine + H2O = L-homocysteine + adenosine. It functions in the pathway amino-acid biosynthesis; L-homocysteine biosynthesis; L-homocysteine from S-adenosyl-L-homocysteine: step 1/1. Its function is as follows. May play a key role in the regulation of the intracellular concentration of adenosylhomocysteine. This chain is Adenosylhomocysteinase, found in Gloeobacter violaceus (strain ATCC 29082 / PCC 7421).